We begin with the raw amino-acid sequence, 211 residues long: ATP phosphoribosyltransferase (211 aa).

It belongs to the ATP phosphoribosyltransferase family. Short subfamily. As to quaternary structure, heteromultimer composed of HisG and HisZ subunits.

It is found in the cytoplasm. The catalysed reaction is 1-(5-phospho-beta-D-ribosyl)-ATP + diphosphate = 5-phospho-alpha-D-ribose 1-diphosphate + ATP. It participates in amino-acid biosynthesis; L-histidine biosynthesis; L-histidine from 5-phospho-alpha-D-ribose 1-diphosphate: step 1/9. Its function is as follows. Catalyzes the condensation of ATP and 5-phosphoribose 1-diphosphate to form N'-(5'-phosphoribosyl)-ATP (PR-ATP). Has a crucial role in the pathway because the rate of histidine biosynthesis seems to be controlled primarily by regulation of HisG enzymatic activity. In Bacillus mycoides (strain KBAB4) (Bacillus weihenstephanensis), this protein is ATP phosphoribosyltransferase.